We begin with the raw amino-acid sequence, 428 residues long: Dihydroorotase (428 aa).

Residues H59 and H61 each coordinate Zn(2+). Substrate-binding positions include 61–63 and N93; that span reads HFR. The Zn(2+) site is built by D151, H178, and H231. N277 is a substrate binding site. D304 is a binding site for Zn(2+). The active site involves D304. Substrate is bound by residues H308 and 322–323; that span reads FG.

The protein belongs to the metallo-dependent hydrolases superfamily. DHOase family. Class I DHOase subfamily. Homodimer. Requires Zn(2+) as cofactor.

The catalysed reaction is (S)-dihydroorotate + H2O = N-carbamoyl-L-aspartate + H(+). Its pathway is pyrimidine metabolism; UMP biosynthesis via de novo pathway; (S)-dihydroorotate from bicarbonate: step 3/3. Functionally, catalyzes the reversible cyclization of carbamoyl aspartate to dihydroorotate. This is Dihydroorotase from Bacillus subtilis (strain 168).